Consider the following 706-residue polypeptide: Protein-glutamine gamma-glutamyltransferase 6 (706 aa).

Residues alanine 223, asparagine 226, and asparagine 228 each contribute to the Ca(2+) site. Residue cysteine 274 is part of the active site. Ca(2+) contacts are provided by aspartate 303, aspartate 305, asparagine 307, serine 309, and aspartate 327. Active-site residues include histidine 333 and aspartate 356. Residues asparagine 396, threonine 417, glutamate 445, and glutamate 450 each coordinate Ca(2+).

The protein belongs to the transglutaminase superfamily. Transglutaminase family. It depends on Ca(2+) as a cofactor.

The protein resides in the cytoplasm. The catalysed reaction is L-glutaminyl-[protein] + L-lysyl-[protein] = [protein]-L-lysyl-N(6)-5-L-glutamyl-[protein] + NH4(+). Its function is as follows. Catalyzes the cross-linking of proteins and the conjugation of polyamines to proteins. The protein is Protein-glutamine gamma-glutamyltransferase 6 (TGM6) of Homo sapiens (Human).